A 623-amino-acid polypeptide reads, in one-letter code: Aspartate--tRNA(Asp/Asn) ligase (623 aa).

An L-aspartate-binding site is contributed by E175. Positions 199 to 202 are aspartate; sequence QQFK. The L-aspartate site is built by R221 and H455. ATP is bound at residue 221-223; the sequence is RDE. E517 provides a ligand contact to ATP. L-aspartate is bound at residue R524. 569-572 is an ATP binding site; it reads GVDR.

Belongs to the class-II aminoacyl-tRNA synthetase family. Type 1 subfamily. In terms of assembly, homodimer.

The protein localises to the cytoplasm. The enzyme catalyses tRNA(Asx) + L-aspartate + ATP = L-aspartyl-tRNA(Asx) + AMP + diphosphate. Functionally, aspartyl-tRNA synthetase with relaxed tRNA specificity since it is able to aspartylate not only its cognate tRNA(Asp) but also tRNA(Asn). Reaction proceeds in two steps: L-aspartate is first activated by ATP to form Asp-AMP and then transferred to the acceptor end of tRNA(Asp/Asn). This Methylocella silvestris (strain DSM 15510 / CIP 108128 / LMG 27833 / NCIMB 13906 / BL2) protein is Aspartate--tRNA(Asp/Asn) ligase.